The following is a 357-amino-acid chain: Aminomethyltransferase (357 aa).

Belongs to the GcvT family. The glycine cleavage system is composed of four proteins: P, T, L and H.

The enzyme catalyses N(6)-[(R)-S(8)-aminomethyldihydrolipoyl]-L-lysyl-[protein] + (6S)-5,6,7,8-tetrahydrofolate = N(6)-[(R)-dihydrolipoyl]-L-lysyl-[protein] + (6R)-5,10-methylene-5,6,7,8-tetrahydrofolate + NH4(+). In terms of biological role, the glycine cleavage system catalyzes the degradation of glycine. This chain is Aminomethyltransferase, found in Deinococcus deserti (strain DSM 17065 / CIP 109153 / LMG 22923 / VCD115).